Here is a 440-residue protein sequence, read N- to C-terminus: Glycerophosphocholine cholinephosphodiesterase ENPP6 (440 aa).

The first 22 residues, 1 to 22 (MAVKLGTLLLALALGLAQPASA), serve as a signal peptide directing secretion. Substrate contacts are provided by Asp32, Ser71, and Asn92. Zn(2+) contacts are provided by Asp32 and Ser71. The Nucleophile role is filled by Ser71. Residue Ser71 is modified to Phosphoserine. Asn100 and Asn118 each carry an N-linked (GlcNAc...) asparagine glycan. Cys142 and Cys154 are oxidised to a cystine. Asp193 is a substrate binding site. Zn(2+)-binding residues include Asp193, His197, Asp240, and His241. His241 serves as a coordination point for substrate. Asn341 carries an N-linked (GlcNAc...) asparagine glycan. His354 is a binding site for substrate. Residue His354 participates in Zn(2+) binding. N-linked (GlcNAc...) asparagine glycosylation occurs at Asn404. Ser419 carries the GPI-anchor amidated serine lipid modification. Positions 420-440 (TAPPVWPSHCALALILLFLLA) are cleaved as a propeptide — removed in mature form.

It belongs to the nucleotide pyrophosphatase/phosphodiesterase family. As to quaternary structure, homodimer; disulfide-linked. Homotetramer. The cofactor is Zn(2+). As to expression, predominantly expressed in kidney and brain. In the kidney, expressed specifically in the proximal tubules and thin descending limbs of Henle (at protein level).

It localises to the cell membrane. The enzyme catalyses sn-glycerol 3-phosphocholine + H2O = phosphocholine + glycerol + H(+). It catalyses the reaction a 1-acyl-sn-glycero-3-phosphocholine + H2O = a 1-acyl-sn-glycerol + phosphocholine + H(+). It carries out the reaction a 1-O-alkyl-sn-glycero-3-phosphocholine + H2O = a 1-O-alkyl-sn-glycerol + phosphocholine + H(+). The catalysed reaction is 1-dodecanoyl-sn-glycero-3-phosphocholine + H2O = 1-dodecanoyl-sn-glycerol + phosphocholine + H(+). The enzyme catalyses 1-hexadecanoyl-sn-glycero-3-phosphocholine + H2O = 1-hexadecanoyl-sn-glycerol + phosphocholine + H(+). It catalyses the reaction 1-(5Z,8Z,11Z,14Z-eicosatetraenoyl)-sn-glycero-3-phosphocholine + H2O = 1-(5Z,8Z,11Z,14Z-eicosatetraenoyl)-sn-glycerol + phosphocholine + H(+). It carries out the reaction 1-tetradecanoyl-sn-glycero-3-phosphocholine + H2O = 1-tetradecanoyl-sn-glycerol + phosphocholine + H(+). The catalysed reaction is sphing-4-enine-phosphocholine + H2O = sphing-4-enine + phosphocholine + H(+). The enzyme catalyses 1-(9Z-octadecenoyl)-sn-glycero-3-phosphocholine + H2O = 1-(9Z-octadecenoyl)-sn-glycerol + phosphocholine + H(+). It catalyses the reaction 1-(9Z,12Z)-octadecadienoyl-sn-glycero-3-phosphocholine + H2O = 1-(9Z,12Z-octadecadienoyl)-sn-glycerol + phosphocholine + H(+). It carries out the reaction glycero-2-phosphocholine + H2O = phosphocholine + glycerol + H(+). Inhibited by EDTA and EGTA in vitro. Its function is as follows. Choline-specific glycerophosphodiesterase that hydrolyzes glycerophosphocholine (GPC) and lysophosphatidylcholine (LPC) and contributes to supplying choline to the cells. Has a preference for LPC with short (12:0 and 14:0) or polyunsaturated (18:2 and 20:4) fatty acids. In vitro, hydrolyzes only choline-containing lysophospholipids, such as sphingosylphosphorylcholine (SPC), platelet-activating factor (PAF) and lysoPAF, but not other lysophospholipids. The chain is Glycerophosphocholine cholinephosphodiesterase ENPP6 from Homo sapiens (Human).